The primary structure comprises 543 residues: Cytochrome P450 307a1 (543 aa).

Ser219 carries the phosphoserine modification. A disordered region spans residues 440 to 460; sequence FLEPSKEQSPKNSKGSDSGIE. The segment covering 449-460 has biased composition (polar residues); the sequence is PKNSKGSDSGIE. A heme-binding site is contributed by Cys485.

It belongs to the cytochrome P450 family. Requires heme as cofactor.

The protein localises to the endoplasmic reticulum membrane. It is found in the microsome membrane. In terms of biological role, required for correct development of the embryonic midline glial cells which are necessary for the formation of distinct segmental commissures. The chain is Cytochrome P450 307a1 (spo) from Drosophila melanogaster (Fruit fly).